We begin with the raw amino-acid sequence, 577 residues long: 9-cis-epoxycarotenoid dioxygenase NCED6, chloroplastic (577 aa).

The tract at residues 1–25 is disordered; it reads MQHSLRSDLLPTKTSPRSHLLPQPK. The Fe cation site is built by His276, His325, His390, and His563.

Belongs to the carotenoid oxygenase family. Fe(2+) is required as a cofactor. As to expression, expressed before fertilization in male and female gametophytes, and then immediately after pollination, restricted to seed endosperm.

It is found in the plastid. Its subcellular location is the chloroplast stroma. It catalyses the reaction a 9-cis-epoxycarotenoid + O2 = a 12'-apo-carotenal + 2-cis,4-trans-xanthoxin. The enzyme catalyses 9-cis-violaxanthin + O2 = (3S,5R,6S)-5,6-epoxy-3-hydroxy-5,6-dihydro-12'-apo-beta-caroten-12'-al + 2-cis,4-trans-xanthoxin. The catalysed reaction is 9'-cis-neoxanthin + O2 = (3S,5R,6R)-3,5-dihydroxy-6,7-didehydro-5,6-dihydro-12'-apo-beta-caroten-12'-al + 2-cis,4-trans-xanthoxin. Its function is as follows. Has a 11,12(11',12') 9-cis epoxycarotenoid cleavage activity. Catalyzes the first step of abscisic-acid biosynthesis from carotenoids. Contributes probably to abscisic acid synthesis for the induction of seed dormancy. The polypeptide is 9-cis-epoxycarotenoid dioxygenase NCED6, chloroplastic (NCED6) (Arabidopsis thaliana (Mouse-ear cress)).